Reading from the N-terminus, the 144-residue chain is MLMPKRVKYRREHRGKMRGRAKGGTEIAFGEFGLQAQAASWITNRQIEAARRAMTRYMKRGGKVWIKIFPSKPYTAKPLEVRMGSGKGAPEGWVAVVKPGKIMFEIAGVSEEVAREALRLAAHKLPVKCKFVKREENGGESNEN.

This sequence belongs to the universal ribosomal protein uL16 family. As to quaternary structure, part of the 50S ribosomal subunit.

Its function is as follows. Binds 23S rRNA and is also seen to make contacts with the A and possibly P site tRNAs. The polypeptide is Large ribosomal subunit protein uL16 (Bacillus anthracis (strain A0248)).